The primary structure comprises 272 residues: Putative phosphoenolpyruvate synthase regulatory protein (272 aa).

Position 152–159 (152–159) interacts with ADP; the sequence is GVSRCGKT.

Belongs to the pyruvate, phosphate/water dikinase regulatory protein family. PSRP subfamily.

It carries out the reaction [pyruvate, water dikinase] + ADP = [pyruvate, water dikinase]-phosphate + AMP + H(+). The enzyme catalyses [pyruvate, water dikinase]-phosphate + phosphate + H(+) = [pyruvate, water dikinase] + diphosphate. Bifunctional serine/threonine kinase and phosphorylase involved in the regulation of the phosphoenolpyruvate synthase (PEPS) by catalyzing its phosphorylation/dephosphorylation. The polypeptide is Putative phosphoenolpyruvate synthase regulatory protein (Pseudomonas putida (strain ATCC 47054 / DSM 6125 / CFBP 8728 / NCIMB 11950 / KT2440)).